A 518-amino-acid chain; its full sequence is 12S seed storage globulin 2 (518 aa).

An N-terminal signal peptide occupies residues 1-24; that stretch reads MATTRFPSLLFYSYIFLLCNGSMA. 2 disulfides stabilise this stretch: C45–C78 and C121–C324. The region spanning 50-240 is the Cupin type-1 1 domain; the sequence is LQAFEPLRQV…ALGISQQVAQ (191 aa). Residues 280–311 are disordered; it reads IQSQEEQSTQYQVGQSPQYQEGQSTQYQPGQS. Positions 330 to 479 constitute a Cupin type-1 2 domain; the sequence is QNIENPKRAD…AYRISRQEAQ (150 aa). The segment at 482-518 is disordered; that stretch reads KNNRGEEFDAFTPKFTQTGSQSYQDEGESSSTEKASE. Polar residues predominate over residues 495 to 518; that stretch reads KFTQTGSQSYQDEGESSSTEKASE.

This sequence belongs to the 11S seed storage protein (globulins) family. In terms of assembly, hexamer; each subunit is composed of an acidic and a basic chain derived from a single precursor and linked by a disulfide bond.

Functionally, this is a seed storage protein. This chain is 12S seed storage globulin 2, found in Avena sativa (Oat).